A 391-amino-acid chain; its full sequence is Stearoyl-[acyl-carrier-protein] 9-desaturase 5, chloroplastic (391 aa).

The disordered stretch occupies residues 1–20; sequence MAFAPSHTASPSYCGVAQGG. The transit peptide at 1-32 directs the protein to the chloroplast; that stretch reads MAFAPSHTASPSYCGVAQGGRRSNGMSPVVAM. Fe cation contacts are provided by Glu133, Glu171, His174, Glu224, Glu257, and His260.

Belongs to the fatty acid desaturase type 2 family. Homodimer. Fe(2+) is required as a cofactor.

It localises to the plastid. The protein localises to the chloroplast. It catalyses the reaction octadecanoyl-[ACP] + 2 reduced [2Fe-2S]-[ferredoxin] + O2 + 2 H(+) = (9Z)-octadecenoyl-[ACP] + 2 oxidized [2Fe-2S]-[ferredoxin] + 2 H2O. It participates in lipid metabolism; fatty acid metabolism. Converts stearoyl-ACP to oleoyl-ACP by introduction of a cis double bond between carbons 9 and 10 of the acyl chain. This Oryza sativa subsp. indica (Rice) protein is Stearoyl-[acyl-carrier-protein] 9-desaturase 5, chloroplastic.